The chain runs to 302 residues: TATA-box-binding protein (302 aa).

Disordered regions lie at residues Met-1–Thr-22 and Ser-50–Gln-81. The segment covering Ser-50–Gly-70 has biased composition (low complexity). 2 repeat units span residues Leu-128–Val-204 and Ile-218–Leu-295.

The protein belongs to the TBP family. As to expression, enriched in testis but hardly detectable in the ovary (at protein level).

The protein localises to the nucleus. General transcription factor that functions at the core of the DNA-binding multiprotein factor TFIID. Binding of TFIID to the TATA box is the initial transcriptional step of the pre-initiation complex (PIC), playing a role in the activation of eukaryotic genes transcribed by RNA polymerase II. Members of the TBP family are differentially required for transcription and development during early embryogenesis. Regulates mRNA levels in the early embryo by both transcriptional and post-transcriptional mechanisms. Required for transcription of a subset of genes at the mid-blastula transition (MBT). Negatively regulates the expression of other embryonic genes, including autoregulation of the tbp promoter itself. Also functions within a transcription-dependent mechanism to direct the temporally-regulated degradation of a subset of maternal mRNAs after the MBT. This is part of a general mechanism to regulate the maternal to zygotic transition and is required for normal embryonic development. Binds to promoters of a subset of genes. Required for gastrulation. In Danio rerio (Zebrafish), this protein is TATA-box-binding protein.